The sequence spans 391 residues: Argininosuccinate synthase (391 aa).

6–14 contributes to the ATP binding site; it reads AYSGGLDTT. Y84 contacts L-citrulline. G114 contributes to the ATP binding site. T116, N120, and D121 together coordinate L-aspartate. N120 provides a ligand contact to L-citrulline. Positions 124, 171, 180, 253, and 265 each coordinate L-citrulline.

The protein belongs to the argininosuccinate synthase family. Type 1 subfamily. As to quaternary structure, homotetramer.

Its subcellular location is the cytoplasm. It catalyses the reaction L-citrulline + L-aspartate + ATP = 2-(N(omega)-L-arginino)succinate + AMP + diphosphate + H(+). Its pathway is amino-acid biosynthesis; L-arginine biosynthesis; L-arginine from L-ornithine and carbamoyl phosphate: step 2/3. This Metallosphaera sedula (strain ATCC 51363 / DSM 5348 / JCM 9185 / NBRC 15509 / TH2) protein is Argininosuccinate synthase.